The sequence spans 418 residues: MSLLDCFCTSRTQVESLRPEKQSETSIHQYLVDEPTLSWSRPSTRASEVLCSTNVSHYELQVEIGRGFDNLTSVHLARHTPTGTLVTIKITNLENCNEERLKALQKAVILSHFFRHPNITTYWTVFTVGSWLWVISPFMAYGSASQLLRTYFPEGMSETLIRNILFGAVRGLNYLHQNGCIHRSIKASHILISGDGLVTLSGLSHLHSLVKHGQRHRAVYDFPQFSTSVQPWLSPELLRQDLHGYNVKSDIYSVGITACELASGQVPFQDMHRTQMLLQKLKGPPYSPLDISIFPQSESRMKNSQSGVDSGIGESVLVSSGTHTVNSDRLHTPSSKTFSPAFFSLVQLCLQQDPEKRPSASSLLSHVFFKQMKEESQDSILSLLPPAYNKPSISLPPVLPWTEPECDFPDEKDSYWEF.

The Protein kinase domain occupies 58-369 (YELQVEIGRG…ASSLLSHVFF (312 aa)). Residues 64-72 (IGRGFDNLT) and Lys89 each bind ATP.

Belongs to the protein kinase superfamily. STE Ser/Thr protein kinase family. STE20 subfamily. In terms of assembly, component of a trimeric complex composed of STK11/LKB1, STRAD (STRADA or STRADB) and CAB39/MO25 (CAB39/MO25alpha or CAB39L/MO25beta): the complex tethers STK11/LKB1 in the cytoplasm and stimulates its catalytic activity. Interacts with BIRC4/XIAP. These two proteins are likely to coexist in a complex with TAK1, TRAF6, TAB1 and TAB2. Highly expressed in heart, skeletal muscle, testis, liver and colon.

It localises to the nucleus. Its subcellular location is the cytoplasm. Functionally, pseudokinase which, in complex with CAB39/MO25 (CAB39/MO25alpha or CAB39L/MO25beta), binds to and activates STK11/LKB1. Adopts a closed conformation typical of active protein kinases and binds STK11/LKB1 as a pseudosubstrate, promoting conformational change of STK11/LKB1 in an active conformation. The sequence is that of STE20-related kinase adapter protein beta (STRADB) from Homo sapiens (Human).